A 3303-amino-acid chain; its full sequence is MVTNAAGTAATGGATSNTTNNNNLQTNNNSHGANNNNDDFDFDQDSGLQDLGLPVSVQTFLWRQIAPFIRPKLGKLHESTCLFCQHAPGHHESKEACKSFEKVLVQNIQFGLSPPLTKGLGVIPRWRLLQGALPHVMHACAALLYNRVKDMQAIGPVETKLLYTMQWILLYAAEECADDEGGEDLGLGDAAEPKSKSIDQYLFSVPTITLFVYLFAPIIHHLKESDFQNFRLENGIKLWQGMWDNRAPGAPCFTAPVKPKARNLLCAPTPKGSTDVFPARKHSLSADAMSPKADSPQSGISDYGRQDEEGSWVSSPKEFAFPETIPEEASSVEDERVVIFRLPSAPQLMDNSFFTADASLLQQQQSQSRRGSRQSMNSRDKDKVPSTKFEFDQQELMRGASMKEKRSASIEKETDSDKSESIKADVSAATFLDVAVLRCLFISHWQEEGIFWSLQYLYNRLSDIGEEAAITLNQPRKRSNSLPIPQIEISLYQGPGSNSRDSPGSSVVKDYIEIPDPSPTVTACVAEEPQSAPSTTERRGSEKKKRVKMADLRAFVETKMFSKSEKNLEKVGLDTNSANGKTPLQHAEYHRSLDTGEKKLSRSASMISREPASNLIKGKSMPSLRFYRYVEPPKAPRPSQATCPRSTAFYPRNPIITVTEHTPTPSPDYMKRQGSIDSQLDALSNGGSIAGMTGNGGGNGSTGMGSSTTRYRGQMLRSHTDSHIDYTGVDESEAPGSSFYITRDGGIDYEIILLAISNVFKRDPAQVCSLRVLEAGLNICELLIEMGVLKLGEHAHEISMSITRRALQVLGCPHGCNDGVRGPPADFLRNQCQKILSRMLRQAGQRTKRFMQEMVKTSPLPELIDYFHAFLAFCVDPSSLLSPLSQGGYSTNFSGGMSGGAEAQVVGAVFKPLVSRFVEASKDLKGPENIALYGDIRQLVTYVKGAHGGPFRLVALSGILAVTPRPHKKGPSAQTTRVIRHIPQANANQSLQNDDNRSQRRLLLKKRSTSSACASLLETEACEEHYKTSQSPLSNFRRRTTGVRPTLTPRHSERALLSDSTSSSERNSLGRLSGLVRWFRGTPKEASSIDLEIGSLNPEISSTFMRHASLKIQRGRSSDGIGRSIQRAKRRVERRLNRFGGIVKGKKKVGGIEETADFSRRSSSDMCDGPRESEVVILKERKLVPTEPVRVGMLRLSFLLETCAPGSFPDPQLVAAVLDLPQAPLVARATFLLECAHFVHLCNKGQWPAWMKQNVGSYRASGANINLNQMKQQVSQTSARRTHILQRAAGKMFHQWAEMVGARLEEILFTERLQYEAVNASLTDPEKQRELLQQDEEEDFLDETSVNPHGNDCPHSLKLIACVLLFEITAFLRDTYLMLPKTSKLIHRDKPAPWEKVYREANRRWSMALSSMGHSQTSAQSLQSIAAGNDGAGQSERKISFVLHEPDNESENSSNTTLTKEGEEARRPTTSAVRPFLLRRGTATTTGGSFKRRSLKLRRNTKDSKDIETDFNMQSRRKVSSLSDRSDTSEQGMISGGEESPGILSDDQQPESPTDSNENDDTAKNMPWLKAIIDLMSSYNYYCTHKGYCHPFCYKRHMRSCTRLVKATRKVYGEEFGFTFDADHPNVEPTIITSSKPHTSRARSTRKVSEQSSTQTSPSKRKDSLSRKDRISDDPDLEMAEKLAKAFRQEKEKKMQEEPPILKFIRIHIRNLFHFPLATLLKGAVVLTEEMVIEAMPAAWELLLETNHDTATSSAAVFLMGSVKAQNFAFDIMQRALKHKDPDIRIGAIQRYLVLWKCRFHVWPRMEENAHDVTFKVPPGGIEFTLPSPKIGIESLPVVDPPWMPVQQTKDMDVTLNQDRHRSLVTATKSRKMQQTEAIRNALRQQRDKQRAERHSFLITMIPISQQASHEPGMEKLEDHEIEEDLDGTRMSSHLHHAHSLFPSVLCSSVMQIVGCLDDAAIGSDGNAVYEIAYQVIWVCLVEESALFLRYVFERLTRDRQDQMFKLLRHLIRFVPRLPQQAAFALYNSIIGYIMFYVRSSNELKQELVGSALSVLWMVVHSVHGIMFKDLKQILRKEQCDASILLTANVPAAKKIVVHGPADDDYNIPSQFPVQEDTLFCQLLKEALDYYPIDEKNTSHYCLVDYKSSKILNPNWYIRDLYFFKRSQYPEVRLMLMRPEESFLALQKQELTKKFVEIGKVHLTWAILKNVDMVVQRVVFLHEELMKLPSFPRKALEVDLDLHHGGEYGKVLLGLDVLHKFMWVRLIARMFEAMAGNFAYSADIQLFLNVLSGASILHAEDSCIMRYVMATFINAAFNFKNIFSTNGYFMIMPTLLQVYSLHQTNKLITTTIEYAVKQFYLLNRKPFILQMFGSVSAILDTDEDGTYGEAHKVQSSCLFNLLLSLEDPSPDPLNIAELVKEPKPLKAIDFCYHDEDDDVTVLDCITLCVMVVSYSAESTRGYQMLIILEAILPCYLQQIQSPSYIPLQGKSERDIILQLAVAIRTMVHNCEGLAKSYNGPYRNSPEHKGSSQRNCSRGPPCSPGLDFEEETHPKYMTDARTKNMMDSAEDSEMIRTEYRRPRDVLLSVVADFLTKSTVRLAELAKKMPSDTKPTEVLDAKCHIRLADIAHSLLKVSPYDPESMACRGLQRYMQAVLPRAEWSNDTLRNALVTILRRIDKVFLKISKKPSIRRNTDWEAAAGLLKGIHETIIRHSYVLHWQQMKTLISTVQNLIVNEPGIPEGVSSAGAALMSQNPPAFFCSAVVRLVALQVVSPVDCFSLVQICGGSSEFATQEKAEGFLMHLIMPLCLKVCSGRGVSDVGELKMSDVSFLLTAVLNAMSPPAGRTGQAVSQINRVTGDLRAGSLTFTGSRDAKRPARISGSLYQAAFLALRIVCICFESRLSNEWPRIVRVMRDLGRRNEAAPDLWSFMEFVVTHRTPLYIVLLPFILHKISQPPIGDHERHMQFIIRERLRGTPPQGGIKSKGALLLELARELRDLRDELEEKRYDRESSEQKKSDTPAATSAAEAHKSQQRPSLISIFTGTTTGQASHSHVSAVPIDSRSGSGGICTPSDTLSQQTLHPPRESLSSSSTGRDPHTTTSESQSGEADAGSAPTLVGATPSGSGHGSGGGIGTGAASAVPSHLSHSQSLQQAPFKAQPPKLRFVSSVEFRHSSGETSTTPLSPESPAEDSSGDHTRSRLQRSKAASRKTFRLKRSRLTPMEPPSIVTSQEEQAPQAQAKTLGEISWDSVSQTSSTSGYRDNNSLQTGLLSPDGSLGGLTLGRSPSQHSLLMVFEGQDEDTLI.

A compositionally biased stretch (low complexity) spans 1 to 37; the sequence is MVTNAAGTAATGGATSNTTNNNNLQTNNNSHGANNNN. The tract at residues 1-43 is disordered; the sequence is MVTNAAGTAATGGATSNTTNNNNLQTNNNSHGANNNNDDFDFD. A helical membrane pass occupies residues 202–222; that stretch reads LFSVPTITLFVYLFAPIIHHL. 7 disordered regions span residues 284-316, 361-422, 491-512, 526-546, 1036-1067, 1443-1563, and 1627-1671; these read LSAD…VSSP, LQQQ…SESI, LYQG…KDYI, AEEP…KKKR, FRRR…SERN, LHEP…DDTA, and VEPT…KDRI. Residues 361-377 are compositionally biased toward low complexity; it reads LQQQQSQSRRGSRQSMN. Composition is skewed to basic and acidic residues over residues 378 to 391 and 401 to 422; these read SRDK…KFEF and SMKE…SESI. Over residues 495–505 the composition is skewed to polar residues; it reads PGSNSRDSPGS. Residues 1058 to 1067 are compositionally biased toward polar residues; it reads SDSTSSSERN. Positions 1490–1499 are enriched in basic residues; that stretch reads FKRRSLKLRR. A compositionally biased stretch (polar residues) spans 1546–1556; it reads DDQQPESPTDS. Positions 1660-1671 are enriched in basic and acidic residues; sequence KRKDSLSRKDRI. 3 helical membrane passes run 1969–1989, 2018–2038, and 2048–2068; these read VYEI…ALFL, LPQQ…MFYV, and LVGS…GIMF. Disordered regions lie at residues 2518–2550, 3003–3158, and 3170–3262; these read NGPY…FEEE, EEKR…FKAQ, and FRHS…YRDN. Residues 3003–3018 are compositionally biased toward basic and acidic residues; sequence EEKRYDRESSEQKKSD. 2 stretches are compositionally biased toward polar residues: residues 3033–3053 and 3071–3106; these read QRPS…SHSH and PSDT…SQSG. Residues 3124 to 3134 are compositionally biased toward gly residues; it reads SGHGSGGGIGT. Positions 3135–3152 are enriched in low complexity; the sequence is GAASAVPSHLSHSQSLQQ. Residues 3198–3217 show a composition bias toward basic residues; it reads SRLQRSKAASRKTFRLKRSR. Over residues 3226-3239 the composition is skewed to polar residues; the sequence is IVTSQEEQAPQAQA. Over residues 3246-3257 the composition is skewed to low complexity; it reads SWDSVSQTSSTS.

The protein belongs to the unc-80 family. As to quaternary structure, interacts with unc79 and na. Can interact with unc79 independently of na.

Its subcellular location is the membrane. Component of the na (narrow abdomen) sodium channel complex. In the circadian clock neurons it functions with na and unc79 to promote circadian rhythmicity. The chain is Protein unc-80 homolog from Drosophila melanogaster (Fruit fly).